Reading from the N-terminus, the 257-residue chain is Zinc uptake system ATP-binding protein ZurA (257 aa).

Residues 5-241 (IEVNNVSYHY…ADRELEILAE (237 aa)) enclose the ABC transporter domain. Position 37–44 (37–44 (GPNGSGKS)) interacts with ATP.

Belongs to the ABC transporter superfamily.

Involved in a zinc uptake transport system. The chain is Zinc uptake system ATP-binding protein ZurA (zurA) from Listeria monocytogenes serovar 1/2a (strain ATCC BAA-679 / EGD-e).